The primary structure comprises 953 residues: UPF0746 protein DDB_G0281301 (953 aa).

Basic and acidic residues predominate over residues 1–10 (MVNNKRKEIE). The disordered stretch occupies residues 1–23 (MVNNKRKEIENQENDNNDDNDGL). The span at 11–21 (NQENDNNDDND) shows a compositional bias: acidic residues. Positions 35-69 (YDSIRSKELQTIAKSLGLPIIGKKQEIYKRIEGYF) constitute an SAP domain.

It belongs to the UPF0746 family.

The chain is UPF0746 protein DDB_G0281301 from Dictyostelium discoideum (Social amoeba).